Here is a 442-residue protein sequence, read N- to C-terminus: Trigger factor (442 aa).

In terms of domain architecture, PPIase FKBP-type spans 163–248 (GDQVVIDFLG…IKEVKAPKAA (86 aa)).

The protein belongs to the FKBP-type PPIase family. Tig subfamily.

It localises to the cytoplasm. The enzyme catalyses [protein]-peptidylproline (omega=180) = [protein]-peptidylproline (omega=0). Its function is as follows. Involved in protein export. Acts as a chaperone by maintaining the newly synthesized protein in an open conformation. Functions as a peptidyl-prolyl cis-trans isomerase. The sequence is that of Trigger factor from Dinoroseobacter shibae (strain DSM 16493 / NCIMB 14021 / DFL 12).